A 427-amino-acid polypeptide reads, in one-letter code: Adenylosuccinate synthetase (427 aa).

Residues 12 to 18 (GDEGKGK) and 40 to 42 (GHT) each bind GTP. Catalysis depends on aspartate 13, which acts as the Proton acceptor. Positions 13 and 40 each coordinate Mg(2+). IMP contacts are provided by residues 13-16 (DEGK), 38-41 (NAGH), threonine 126, arginine 140, glutamine 221, threonine 236, and arginine 299. The active-site Proton donor is histidine 41. A substrate-binding site is contributed by 295 to 301 (STTKRPR). GTP contacts are provided by residues arginine 301, 327–329 (KLD), and 409–411 (SVG).

Belongs to the adenylosuccinate synthetase family. As to quaternary structure, homodimer. It depends on Mg(2+) as a cofactor.

It localises to the cytoplasm. The catalysed reaction is IMP + L-aspartate + GTP = N(6)-(1,2-dicarboxyethyl)-AMP + GDP + phosphate + 2 H(+). It participates in purine metabolism; AMP biosynthesis via de novo pathway; AMP from IMP: step 1/2. Functionally, plays an important role in the de novo pathway of purine nucleotide biosynthesis. Catalyzes the first committed step in the biosynthesis of AMP from IMP. This chain is Adenylosuccinate synthetase, found in Borrelia recurrentis (strain A1).